The primary structure comprises 453 residues: MKLLTRAGSFSRFYSLKVAPKVKATAAPAGAPPQPQDLEFTKLPNGLVIASLENYSPVSRIGLFIKAGSRYEDFSNLGTTHLLRLTSSLTTKGASSFKITRGIEAVGGKLSVTATRENMAYTVECLRGDVDILMEFLLNVTTAPEFRRWEVADLQPQLKIDKAVAFQNPQTHVIENLHAAAYRNALANPLYCPDYRIGKVTSEELHYFVQNHFTSARMALIGLGVSHPVLKQVAEQFLNMRGGLGLSGAKANYRGGEIREQNGDSLVHAAFVAESAVAGSAEANAFSVLQHVLGAGPHVKRGSNTTSHLHQAVAKATQQPFDVSAFNASYSDSGLFGIYTISQATAAGDVIKAAYNQVKTIAQGNLSNTDVQAAKNKLKAGYLMSVESSECFLEEVGSQALVAGSYMPPSTVLQQIDSVANADIINAAKKFVSGQKSMAASGNLGHTPFVDEL.

The transit peptide at 1–14 (MKLLTRAGSFSRFY) directs the protein to the mitochondrion. Lys-66, Lys-199, and Lys-250 each carry N6-acetyllysine.

This sequence belongs to the peptidase M16 family. UQCRC2/QCR2 subfamily. As to quaternary structure, component of the ubiquinol-cytochrome c oxidoreductase (cytochrome b-c1 complex, complex III, CIII), a multisubunit enzyme composed of 11 subunits. The complex is composed of 3 respiratory subunits cytochrome b, cytochrome c1 and Rieske protein UQCRFS1, 2 core protein subunits UQCRC1/QCR1 and UQCRC2/QCR2, and 6 low-molecular weight protein subunits UQCRH/QCR6, UQCRB/QCR7, UQCRQ/QCR8, UQCR10/QCR9, UQCR11/QCR10 and subunit 9, the cleavage product of Rieske protein UQCRFS1. The complex exists as an obligatory dimer and forms supercomplexes (SCs) in the inner mitochondrial membrane with NADH-ubiquinone oxidoreductase (complex I, CI) and cytochrome c oxidase (complex IV, CIV), resulting in different assemblies (supercomplex SCI(1)III(2)IV(1) and megacomplex MCI(2)III(2)IV(2)). Interacts with RAB5IF. Interacts with STMP1.

It is found in the mitochondrion inner membrane. In terms of biological role, component of the ubiquinol-cytochrome c oxidoreductase, a multisubunit transmembrane complex that is part of the mitochondrial electron transport chain which drives oxidative phosphorylation. The respiratory chain contains 3 multisubunit complexes succinate dehydrogenase (complex II, CII), ubiquinol-cytochrome c oxidoreductase (cytochrome b-c1 complex, complex III, CIII) and cytochrome c oxidase (complex IV, CIV), that cooperate to transfer electrons derived from NADH and succinate to molecular oxygen, creating an electrochemical gradient over the inner membrane that drives transmembrane transport and the ATP synthase. The cytochrome b-c1 complex catalyzes electron transfer from ubiquinol to cytochrome c, linking this redox reaction to translocation of protons across the mitochondrial inner membrane, with protons being carried across the membrane as hydrogens on the quinol. In the process called Q cycle, 2 protons are consumed from the matrix, 4 protons are released into the intermembrane space and 2 electrons are passed to cytochrome c. The 2 core subunits UQCRC1/QCR1 and UQCRC2/QCR2 are homologous to the 2 mitochondrial-processing peptidase (MPP) subunits beta-MPP and alpha-MPP respectively, and they seem to have preserved their MPP processing properties. May be involved in the in situ processing of UQCRFS1 into the mature Rieske protein and its mitochondrial targeting sequence (MTS)/subunit 9 when incorporated into complex III. This chain is Cytochrome b-c1 complex subunit 2, mitochondrial (UQCRC2), found in Homo sapiens (Human).